Here is a 498-residue protein sequence, read N- to C-terminus: N-succinylglutamate 5-semialdehyde dehydrogenase 1 (498 aa).

Residue 231–236 coordinates NAD(+); sequence GSSNTG. Residues glutamate 254 and cysteine 288 contribute to the active site.

This sequence belongs to the aldehyde dehydrogenase family. AstD subfamily.

It carries out the reaction N-succinyl-L-glutamate 5-semialdehyde + NAD(+) + H2O = N-succinyl-L-glutamate + NADH + 2 H(+). Its pathway is amino-acid degradation; L-arginine degradation via AST pathway; L-glutamate and succinate from L-arginine: step 4/5. Catalyzes the NAD-dependent reduction of succinylglutamate semialdehyde into succinylglutamate. This chain is N-succinylglutamate 5-semialdehyde dehydrogenase 1, found in Shewanella denitrificans (strain OS217 / ATCC BAA-1090 / DSM 15013).